Reading from the N-terminus, the 199-residue chain is Superoxide dismutase [Fe] (199 aa).

Fe cation is bound by residues His28, His80, Asp162, and His166.

Belongs to the iron/manganese superoxide dismutase family. Homodimer. Fe cation serves as cofactor.

The protein localises to the cytoplasm. It catalyses the reaction 2 superoxide + 2 H(+) = H2O2 + O2. Functionally, destroys superoxide anion radicals which are normally produced within the cells and which are toxic to biological systems. This is Superoxide dismutase [Fe] (sodB) from Leptolyngbya boryana (Plectonema boryanum).